The chain runs to 490 residues: Aspartyl/glutamyl-tRNA(Asn/Gln) amidotransferase subunit B (490 aa).

The protein belongs to the GatB/GatE family. GatB subfamily. In terms of assembly, heterotrimer of A, B and C subunits.

The enzyme catalyses L-glutamyl-tRNA(Gln) + L-glutamine + ATP + H2O = L-glutaminyl-tRNA(Gln) + L-glutamate + ADP + phosphate + H(+). The catalysed reaction is L-aspartyl-tRNA(Asn) + L-glutamine + ATP + H2O = L-asparaginyl-tRNA(Asn) + L-glutamate + ADP + phosphate + 2 H(+). Functionally, allows the formation of correctly charged Asn-tRNA(Asn) or Gln-tRNA(Gln) through the transamidation of misacylated Asp-tRNA(Asn) or Glu-tRNA(Gln) in organisms which lack either or both of asparaginyl-tRNA or glutaminyl-tRNA synthetases. The reaction takes place in the presence of glutamine and ATP through an activated phospho-Asp-tRNA(Asn) or phospho-Glu-tRNA(Gln). In Synechococcus sp. (strain JA-2-3B'a(2-13)) (Cyanobacteria bacterium Yellowstone B-Prime), this protein is Aspartyl/glutamyl-tRNA(Asn/Gln) amidotransferase subunit B.